We begin with the raw amino-acid sequence, 194 residues long: Flagellar transcriptional regulator FlhC (194 aa).

Zn(2+)-binding residues include Cys-139, Cys-142, Cys-159, and Cys-162.

This sequence belongs to the FlhC family. Heterohexamer composed of two FlhC and four FlhD subunits. Each FlhC binds a FlhD dimer, forming a heterotrimer, and a hexamer assembles by dimerization of two heterotrimers. Zn(2+) serves as cofactor.

Its subcellular location is the cytoplasm. In terms of biological role, functions in complex with FlhD as a master transcriptional regulator that regulates transcription of several flagellar and non-flagellar operons by binding to their promoter region. Activates expression of class 2 flagellar genes, including fliA, which is a flagellum-specific sigma factor that turns on the class 3 genes. Also regulates genes whose products function in a variety of physiological pathways. The protein is Flagellar transcriptional regulator FlhC of Serratia marcescens.